We begin with the raw amino-acid sequence, 141 residues long: Nucleoside diphosphate kinase (141 aa).

K11, F59, R87, T93, R104, and N114 together coordinate ATP. The active-site Pros-phosphohistidine intermediate is H117.

It belongs to the NDK family. As to quaternary structure, homotetramer. The cofactor is Mg(2+).

Its subcellular location is the cytoplasm. It carries out the reaction a 2'-deoxyribonucleoside 5'-diphosphate + ATP = a 2'-deoxyribonucleoside 5'-triphosphate + ADP. It catalyses the reaction a ribonucleoside 5'-diphosphate + ATP = a ribonucleoside 5'-triphosphate + ADP. Functionally, major role in the synthesis of nucleoside triphosphates other than ATP. The ATP gamma phosphate is transferred to the NDP beta phosphate via a ping-pong mechanism, using a phosphorylated active-site intermediate. In Burkholderia thailandensis (strain ATCC 700388 / DSM 13276 / CCUG 48851 / CIP 106301 / E264), this protein is Nucleoside diphosphate kinase.